The following is a 462-amino-acid chain: Argininosuccinate lyase (462 aa).

The protein belongs to the lyase 1 family. Argininosuccinate lyase subfamily.

Its subcellular location is the cytoplasm. It catalyses the reaction 2-(N(omega)-L-arginino)succinate = fumarate + L-arginine. The protein operates within amino-acid biosynthesis; L-arginine biosynthesis; L-arginine from L-ornithine and carbamoyl phosphate: step 3/3. This Methylobacterium nodulans (strain LMG 21967 / CNCM I-2342 / ORS 2060) protein is Argininosuccinate lyase.